A 702-amino-acid polypeptide reads, in one-letter code: Methionine--tRNA ligase (702 aa).

Positions 23 to 33 (PYANGPLHLGH) match the 'HIGH' region motif. Residues C154, C157, C167, and C170 each contribute to the Zn(2+) site. Residues 341–345 (KMSKS) carry the 'KMSKS' region motif. An ATP-binding site is contributed by K344. A disordered region spans residues 562-593 (LAPPPASAKQQNASMSNTAPPPTAEEPETTAP). Residues 569–578 (AKQQNASMSN) are compositionally biased toward polar residues. The region spanning 599-702 (DFAKLDLRIG…SSAQPGMPVR (104 aa)) is the tRNA-binding domain.

This sequence belongs to the class-I aminoacyl-tRNA synthetase family. MetG type 1 subfamily. As to quaternary structure, homodimer. Zn(2+) is required as a cofactor.

It localises to the cytoplasm. The enzyme catalyses tRNA(Met) + L-methionine + ATP = L-methionyl-tRNA(Met) + AMP + diphosphate. Is required not only for elongation of protein synthesis but also for the initiation of all mRNA translation through initiator tRNA(fMet) aminoacylation. This is Methionine--tRNA ligase from Xylella fastidiosa (strain M23).